The chain runs to 102 residues: Large ribosomal subunit protein uL24 (102 aa).

It belongs to the universal ribosomal protein uL24 family. In terms of assembly, part of the 50S ribosomal subunit.

One of two assembly initiator proteins, it binds directly to the 5'-end of the 23S rRNA, where it nucleates assembly of the 50S subunit. Functionally, one of the proteins that surrounds the polypeptide exit tunnel on the outside of the subunit. This Burkholderia ambifaria (strain ATCC BAA-244 / DSM 16087 / CCUG 44356 / LMG 19182 / AMMD) (Burkholderia cepacia (strain AMMD)) protein is Large ribosomal subunit protein uL24.